Consider the following 123-residue polypeptide: MPTINQLVRNGRLRAAKKASTPALAGSPQRRGVCVRVYTSTPKKPNSALRKVARVRLTSRYEVTSYIPGIGHNLQEHSVVLVRGGRVKDLPGVRYHIVRGTLDAVGVQDRKQGRSKYGAKKPS.

Asp-89 bears the 3-methylthioaspartic acid mark.

The protein belongs to the universal ribosomal protein uS12 family. As to quaternary structure, part of the 30S ribosomal subunit. Contacts proteins S8 and S17. May interact with IF1 in the 30S initiation complex.

In terms of biological role, with S4 and S5 plays an important role in translational accuracy. Functionally, interacts with and stabilizes bases of the 16S rRNA that are involved in tRNA selection in the A site and with the mRNA backbone. Located at the interface of the 30S and 50S subunits, it traverses the body of the 30S subunit contacting proteins on the other side and probably holding the rRNA structure together. The combined cluster of proteins S8, S12 and S17 appears to hold together the shoulder and platform of the 30S subunit. The protein is Small ribosomal subunit protein uS12 of Syntrophus aciditrophicus (strain SB).